Consider the following 60-residue polypeptide: Acidic phospholipase A2 (60 aa).

Ca(2+)-binding residues include Tyr27, Gly29, and Gly31. An intrachain disulfide couples Cys28 to Cys44. The active site involves His47. Asp48 contributes to the Ca(2+) binding site.

This sequence belongs to the phospholipase A2 family. Group II subfamily. D49 sub-subfamily. Monomer. The cofactor is Ca(2+). In terms of tissue distribution, expressed by the venom gland.

It is found in the secreted. The catalysed reaction is a 1,2-diacyl-sn-glycero-3-phosphocholine + H2O = a 1-acyl-sn-glycero-3-phosphocholine + a fatty acid + H(+). Its function is as follows. Snake venom phospholipase A2 (PLA2) that exhibits an indirect hemolytic activity, a low myotoxicity, and induces edema. In addition, this enzyme has been shown to induce the release of some pro- and anti-inflammatory cytokines from human PBMC (IL12B, TNF-alpha, IL1B and IL6 but not variation has been observed for IL-8 and IL-10). PLA2 catalyzes the calcium-dependent hydrolysis of the 2-acyl groups in 3-sn-phosphoglycerides. The polypeptide is Acidic phospholipase A2 (Bothrops leucurus (Whitetail lancehead)).